Reading from the N-terminus, the 341-residue chain is Dye-decolorizing peroxidase (341 aa).

D148 acts as the Proton acceptor in catalysis. H221 is a binding site for heme. Residues 304 to 341 (FLDDPPDAPTRLVPEATFTAPISDGSLGIGSLKRSAQQ) form a targeting peptide region.

Belongs to the DyP-type peroxidase family. Homohexamer. It depends on heme b as a cofactor.

Its subcellular location is the encapsulin nanocompartment. Functionally, cargo protein of a type 1 encapsulin nanocompartment. Has both general peroxidase activity and dye-decolorizing activity. Can catalyze the oxidation of both protoporphyrinogen IX and coproporphyrinogen III to their corresponding porphyrins. Also efficiently decolorizes the dyes alizarin red and Cibacron blue F3GA. This cargo-loaded encapsulin nanocompartment is probably involved in protection against oxidative damage. The chain is Dye-decolorizing peroxidase from Rhodococcus erythropolis (strain PR4 / NBRC 100887).